The chain runs to 270 residues: Myelin protein zero-like protein 1 (270 aa).

Positions 1-35 are cleaved as a signal peptide; that stretch reads MAEAVGAVTLIAAPARRRWLWSALAAMLGLLTARI. Residues 36–151 form the Ig-like V-type domain; sequence SALEVHTPKE…DIVVRPGQIR (116 aa). Over 36–162 the chain is Extracellular; it reads SALEVHTPKE…HVVEIDNLLV (127 aa). Residues Asn-50 and Asn-130 are each glycosylated (N-linked (GlcNAc...) asparagine). The cysteines at positions 58 and 135 are disulfide-linked. The chain crosses the membrane as a helical span at residues 163 to 183; that stretch reads FLVWVVVGTVTAVVLGLTLLI. Topologically, residues 184-270 are cytoplasmic; it reads SLVLVVLYRR…SVVYADIRKD (87 aa). A disordered region spans residues 201–257; sequence TGCSTSERLSPVKQAPRKCPSDTEGLVKSPPSAGSHQGPVIYAQLDHSGGHHSGKIN. A phosphoserine mark is found at Ser-204, Ser-206, Ser-210, and Ser-221. Positions 240 to 245 match the ITIM motif 1 motif; it reads VIYAQL. Tyr-242 is modified (phosphotyrosine). Ser-261 is modified (phosphoserine). An ITIM motif 2 motif is present at residues 262–267; that stretch reads VVYADI. Tyr-264 carries the phosphotyrosine modification.

It belongs to the myelin P0 protein family. As to quaternary structure, interacts with phosphorylated PTPN11/SHP-2. Phosphorylated on tyrosine residues upon stimulation with pervanadate and concanavalin-A (ConA). Phosphorylation at Tyr-242 and Tyr-264 is required for interaction with PTPN11/SHP-2. Dephosphorylated by PTPN11/SHP-2 (in vitro). In terms of processing, N-glycosylated.

It is found in the membrane. Its function is as follows. Cell surface receptor, which is involved in signal transduction processes. Recruits PTPN11/SHP-2 to the cell membrane and is a putative substrate of PTPN11/SHP-2. Is a major receptor for concanavalin-A (ConA) and is involved in cellular signaling induced by ConA, which probably includes Src family tyrosine-protein kinases. May be involved in regulation of integrin-mediated cell motility. This Rattus norvegicus (Rat) protein is Myelin protein zero-like protein 1 (Mpzl1).